A 207-amino-acid polypeptide reads, in one-letter code: Metalloproteinase inhibitor 1 (207 aa).

The first 23 residues, 1-23 (MAPLAALASSMLLLLWLVAPSRA), serve as a signal peptide directing secretion. Cys24 serves as a coordination point for Zn(2+). The segment at 24-27 (CTCV) is involved in metalloproteinase-binding. 6 disulfide bridges follow: Cys24/Cys93, Cys26/Cys122, Cys36/Cys147, Cys150/Cys197, Cys155/Cys160, and Cys168/Cys189. An NTR domain is found at 24 to 147 (CTCVPPHPQT…GFTKTYAAGC (124 aa)). Asn53 carries N-linked (GlcNAc...) asparagine glycosylation. The involved in metalloproteinase-binding stretch occupies residues 90-91 (ES). Asn101 carries N-linked (GlcNAc...) asparagine glycosylation. Ser178 is subject to Phosphoserine.

The protein belongs to the protease inhibitor I35 (TIMP) family. Interacts with MMP1, MMP3, MMP10 and MMP13, but has only very low affinity for MMP14. Interacts with CD63; identified in a complex with CD63 and ITGB1. In terms of processing, the activity of TIMP1 is dependent on the presence of disulfide bonds. N-glycosylated.

The protein localises to the secreted. Metalloproteinase inhibitor that functions by forming one to one complexes with target metalloproteinases, such as collagenases, and irreversibly inactivates them by binding to their catalytic zinc cofactor. Acts on MMP1, MMP2, MMP3, MMP7, MMP8, MMP9, MMP10, MMP11, MMP12, MMP13 and MMP16. Does not act on MMP14. Also functions as a growth factor that regulates cell differentiation, migration and cell death and activates cellular signaling cascades via CD63 and ITGB1. Plays a role in integrin signaling. The sequence is that of Metalloproteinase inhibitor 1 (TIMP1) from Oryctolagus cuniculus (Rabbit).